The following is a 433-amino-acid chain: Serine hydroxymethyltransferase (433 aa).

(6S)-5,6,7,8-tetrahydrofolate contacts are provided by residues leucine 132 and 136–138; that span reads GHL. An N6-(pyridoxal phosphate)lysine modification is found at lysine 241.

The protein belongs to the SHMT family. As to quaternary structure, homodimer. The cofactor is pyridoxal 5'-phosphate.

It is found in the cytoplasm. The enzyme catalyses (6R)-5,10-methylene-5,6,7,8-tetrahydrofolate + glycine + H2O = (6S)-5,6,7,8-tetrahydrofolate + L-serine. It functions in the pathway one-carbon metabolism; tetrahydrofolate interconversion. Its pathway is amino-acid biosynthesis; glycine biosynthesis; glycine from L-serine: step 1/1. Catalyzes the reversible interconversion of serine and glycine with tetrahydrofolate (THF) serving as the one-carbon carrier. This reaction serves as the major source of one-carbon groups required for the biosynthesis of purines, thymidylate, methionine, and other important biomolecules. Also exhibits THF-independent aldolase activity toward beta-hydroxyamino acids, producing glycine and aldehydes, via a retro-aldol mechanism. The polypeptide is Serine hydroxymethyltransferase (Rhodopseudomonas palustris (strain HaA2)).